Consider the following 334-residue polypeptide: Transcription factor TGA2.1 (334 aa).

The span at Met-1–Val-13 shows a compositional bias: polar residues. Positions Met-1–Gln-49 are disordered. Positions Asp-38–Gln-49 are enriched in basic and acidic residues. In terms of domain architecture, bZIP spans Asp-48 to Lys-92. The basic motif stretch occupies residues Lys-50–Lys-70. A leucine-zipper region spans residues Leu-76–Leu-90. Residues Ala-115–Arg-331 enclose the DOG1 domain.

Belongs to the bZIP family. In terms of assembly, interacts with NPR1/NH1 and NPR3/NH3.

Its subcellular location is the nucleus. Its function is as follows. Plays a negative role in rice basal defense responses to the bacterial blight pathogen Xanthomomas oryzae pv. oryzae (Xoo). May function in both positive and negative regulation of rice defense genes. Binds DNA in vitro. Acts as a transcriptional activator when bound to NPR1/NH1 in vitro. Binds to the promoter sequence of CRK10 in vitro. The chain is Transcription factor TGA2.1 from Oryza sativa subsp. japonica (Rice).